We begin with the raw amino-acid sequence, 479 residues long: Pyruvate kinase (479 aa).

Arg-36 contributes to the substrate binding site. Positions 38, 40, and 70 each coordinate K(+). ATP is bound at residue 38–41; the sequence is NFSH. Residues Arg-77 and Lys-160 each coordinate ATP. Glu-225 is a binding site for Mg(2+). Residues Gly-251, Asp-252, and Thr-284 each coordinate substrate. Residue Asp-252 participates in Mg(2+) binding.

It belongs to the pyruvate kinase family. Homotetramer. Mg(2+) serves as cofactor. It depends on K(+) as a cofactor.

The catalysed reaction is pyruvate + ATP = phosphoenolpyruvate + ADP + H(+). Its pathway is carbohydrate degradation; glycolysis; pyruvate from D-glyceraldehyde 3-phosphate: step 5/5. Allosterically activated by AMP and by several sugar phosphates. Belongs to type II PK. This chain is Pyruvate kinase (pykA), found in Buchnera aphidicola subsp. Baizongia pistaciae (strain Bp).